Reading from the N-terminus, the 256-residue chain is Thiazole synthase (256 aa).

Lys95 serves as the catalytic Schiff-base intermediate with DXP. Residues Gly156, 182–183 (AG), and 204–205 (NT) contribute to the 1-deoxy-D-xylulose 5-phosphate site.

The protein belongs to the ThiG family. As to quaternary structure, homotetramer. Forms heterodimers with either ThiH or ThiS.

It is found in the cytoplasm. It catalyses the reaction [ThiS sulfur-carrier protein]-C-terminal-Gly-aminoethanethioate + 2-iminoacetate + 1-deoxy-D-xylulose 5-phosphate = [ThiS sulfur-carrier protein]-C-terminal Gly-Gly + 2-[(2R,5Z)-2-carboxy-4-methylthiazol-5(2H)-ylidene]ethyl phosphate + 2 H2O + H(+). Its pathway is cofactor biosynthesis; thiamine diphosphate biosynthesis. In terms of biological role, catalyzes the rearrangement of 1-deoxy-D-xylulose 5-phosphate (DXP) to produce the thiazole phosphate moiety of thiamine. Sulfur is provided by the thiocarboxylate moiety of the carrier protein ThiS. In vitro, sulfur can be provided by H(2)S. The polypeptide is Thiazole synthase (Salmonella schwarzengrund (strain CVM19633)).